The primary structure comprises 430 residues: Probable glucose-6-phosphate isomerase (430 aa).

Glutamate 271 (proton donor) is an active-site residue. Active-site residues include histidine 292, histidine 303, and lysine 403.

This sequence belongs to the GPI family.

The protein localises to the cytoplasm. It catalyses the reaction alpha-D-glucose 6-phosphate = beta-D-fructose 6-phosphate. It participates in carbohydrate biosynthesis; gluconeogenesis. Its pathway is carbohydrate degradation; glycolysis; D-glyceraldehyde 3-phosphate and glycerone phosphate from D-glucose: step 2/4. Catalyzes the reversible isomerization of glucose-6-phosphate to fructose-6-phosphate. This Haloquadratum walsbyi (strain DSM 16790 / HBSQ001) protein is Probable glucose-6-phosphate isomerase.